The chain runs to 158 residues: SsrA-binding protein (158 aa).

Residues 130–158 (KGKKNHDKREAQAKRDWSRQKQRLLKDHG) are disordered. The segment covering 136 to 158 (DKREAQAKRDWSRQKQRLLKDHG) has biased composition (basic and acidic residues).

This sequence belongs to the SmpB family.

It is found in the cytoplasm. In terms of biological role, required for rescue of stalled ribosomes mediated by trans-translation. Binds to transfer-messenger RNA (tmRNA), required for stable association of tmRNA with ribosomes. tmRNA and SmpB together mimic tRNA shape, replacing the anticodon stem-loop with SmpB. tmRNA is encoded by the ssrA gene; the 2 termini fold to resemble tRNA(Ala) and it encodes a 'tag peptide', a short internal open reading frame. During trans-translation Ala-aminoacylated tmRNA acts like a tRNA, entering the A-site of stalled ribosomes, displacing the stalled mRNA. The ribosome then switches to translate the ORF on the tmRNA; the nascent peptide is terminated with the 'tag peptide' encoded by the tmRNA and targeted for degradation. The ribosome is freed to recommence translation, which seems to be the essential function of trans-translation. The sequence is that of SsrA-binding protein from Ruegeria sp. (strain TM1040) (Silicibacter sp.).